A 276-amino-acid polypeptide reads, in one-letter code: Melibiose/raffinose/stachyose import permease protein MelC (276 aa).

Transmembrane regions (helical) follow at residues 11 to 31 (IITL…YILL), 74 to 94 (IITG…AYPL), 104 to 124 (AVFA…MVPL), 139 to 159 (IAIF…YSGF), 186 to 206 (IVFP…CVFI), and 240 to 260 (LHLV…LFLA). Residues 69–261 (FINTMIITGF…LPMVVLFLAL (193 aa)) form the ABC transmembrane type-1 domain.

The protein belongs to the binding-protein-dependent transport system permease family. In terms of assembly, the complex is composed of two ATP-binding proteins (MsmX), two transmembrane proteins (MelC and MelD) and a solute-binding protein (MelE).

It is found in the cell membrane. In terms of biological role, part of the ABC transporter complex MelEDC-MsmX involved in melibiose, raffinose and stachyose import. Probably responsible for the translocation of the substrate across the membrane. The sequence is that of Melibiose/raffinose/stachyose import permease protein MelC from Bacillus subtilis (strain 168).